Consider the following 373-residue polypeptide: Chaperone protein DnaJ (373 aa).

Residues 5–71 enclose the J domain; the sequence is DYYEILGVSR…EKRAMYDKFG (67 aa). The CR-type zinc finger occupies 144–226; the sequence is GVKIPLEYDR…CGGTGRIRKR (83 aa). Positions 157, 160, 174, 177, 200, 203, 214, and 217 each coordinate Zn(2+). CXXCXGXG motif repeat units follow at residues 157-164, 174-181, 200-207, and 214-221; these read CEHCHGEG, CPKCHGTG, CNQCGGTG, and CRVCGGTG.

It belongs to the DnaJ family. As to quaternary structure, homodimer. The cofactor is Zn(2+).

The protein localises to the cytoplasm. Its function is as follows. Participates actively in the response to hyperosmotic and heat shock by preventing the aggregation of stress-denatured proteins and by disaggregating proteins, also in an autonomous, DnaK-independent fashion. Unfolded proteins bind initially to DnaJ; upon interaction with the DnaJ-bound protein, DnaK hydrolyzes its bound ATP, resulting in the formation of a stable complex. GrpE releases ADP from DnaK; ATP binding to DnaK triggers the release of the substrate protein, thus completing the reaction cycle. Several rounds of ATP-dependent interactions between DnaJ, DnaK and GrpE are required for fully efficient folding. Also involved, together with DnaK and GrpE, in the DNA replication of plasmids through activation of initiation proteins. The sequence is that of Chaperone protein DnaJ from Thermosipho melanesiensis (strain DSM 12029 / CIP 104789 / BI429).